A 156-amino-acid polypeptide reads, in one-letter code: dCTP deaminase (156 aa).

Residues 79–84, aspartate 95, glutamine 124, and tyrosine 138 each bind dCTP; that span reads RSSLAR.

This sequence belongs to the dCTP deaminase family. Homotrimer.

It catalyses the reaction dCTP + H2O + H(+) = dUTP + NH4(+). Its pathway is pyrimidine metabolism; dUMP biosynthesis; dUMP from dCTP (dUTP route): step 1/2. Catalyzes the deamination of dCTP to dUTP. This is dCTP deaminase from Pyrococcus furiosus (strain ATCC 43587 / DSM 3638 / JCM 8422 / Vc1).